Here is a 249-residue protein sequence, read N- to C-terminus: tRNA pseudouridine synthase A (249 aa).

The active-site Nucleophile is the D53. Y111 is a substrate binding site.

The protein belongs to the tRNA pseudouridine synthase TruA family. Homodimer.

It carries out the reaction uridine(38/39/40) in tRNA = pseudouridine(38/39/40) in tRNA. In terms of biological role, formation of pseudouridine at positions 38, 39 and 40 in the anticodon stem and loop of transfer RNAs. In Streptococcus pneumoniae serotype 2 (strain D39 / NCTC 7466), this protein is tRNA pseudouridine synthase A.